Consider the following 152-residue polypeptide: Deoxyuridine 5'-triphosphate nucleotidohydrolase (152 aa).

Substrate-binding positions include 71 to 73 (RSG), asparagine 84, 88 to 90 (LID), and methionine 98.

This sequence belongs to the dUTPase family. Requires Mg(2+) as cofactor.

The catalysed reaction is dUTP + H2O = dUMP + diphosphate + H(+). The protein operates within pyrimidine metabolism; dUMP biosynthesis; dUMP from dCTP (dUTP route): step 2/2. This enzyme is involved in nucleotide metabolism: it produces dUMP, the immediate precursor of thymidine nucleotides and it decreases the intracellular concentration of dUTP so that uracil cannot be incorporated into DNA. The sequence is that of Deoxyuridine 5'-triphosphate nucleotidohydrolase from Shigella flexneri.